The following is a 151-amino-acid chain: U1 small nuclear ribonucleoprotein C (151 aa).

The Matrin-type zinc finger occupies 4–36; the sequence is FYCEYCSIYLTHSSPAGRKQHSQGRKHISAKVE.

It belongs to the U1 small nuclear ribonucleoprotein C family. U1 snRNP is composed of the 7 core Sm proteins B/B', D1, D2, D3, E, F and G that assemble in a heptameric protein ring on the Sm site of the small nuclear RNA to form the core snRNP, and at least 3 U1 snRNP-specific proteins U1-70K, U1-A and U1-C. U1-C interacts with U1 snRNA and the 5' splice-site region of the pre-mRNA.

The protein resides in the nucleus. Functionally, component of the spliceosomal U1 snRNP, which is essential for recognition of the pre-mRNA 5' splice-site and the subsequent assembly of the spliceosome. U1-C is directly involved in initial 5' splice-site recognition for both constitutive and regulated alternative splicing. The interaction with the 5' splice-site seems to precede base-pairing between the pre-mRNA and the U1 snRNA. Stimulates commitment or early (E) complex formation by stabilizing the base pairing of the 5' end of the U1 snRNA and the 5' splice-site region. This chain is U1 small nuclear ribonucleoprotein C, found in Theileria annulata.